A 344-amino-acid polypeptide reads, in one-letter code: tRNA N6-adenosine threonylcarbamoyltransferase (344 aa).

Histidine 112 and histidine 116 together coordinate Fe cation. Substrate-binding positions include 134–138 (LASGG), aspartate 167, glycine 180, and asparagine 280. Position 308 (aspartate 308) interacts with Fe cation.

Belongs to the KAE1 / TsaD family. Fe(2+) is required as a cofactor.

The protein resides in the cytoplasm. It carries out the reaction L-threonylcarbamoyladenylate + adenosine(37) in tRNA = N(6)-L-threonylcarbamoyladenosine(37) in tRNA + AMP + H(+). Functionally, required for the formation of a threonylcarbamoyl group on adenosine at position 37 (t(6)A37) in tRNAs that read codons beginning with adenine. Is involved in the transfer of the threonylcarbamoyl moiety of threonylcarbamoyl-AMP (TC-AMP) to the N6 group of A37, together with TsaE and TsaB. TsaD likely plays a direct catalytic role in this reaction. This is tRNA N6-adenosine threonylcarbamoyltransferase from Rickettsia conorii (strain ATCC VR-613 / Malish 7).